A 302-amino-acid chain; its full sequence is Short-chain dehydrogenase/reductase 3 (302 aa).

The next 4 membrane-spanning stretches (helical) occupy residues 9–29, 170–190, 195–215, and 253–273; these read LVMF…GLVL, IVCL…DYCT, AFAF…VSAT, and AVQL…LVIL. Substrate is bound at residue S175. The Proton acceptor role is filled by Y188.

The protein belongs to the short-chain dehydrogenases/reductases (SDR) family. As to expression, widely expressed with highest levels found in heart, placenta, lung, liver, kidney, pancreas, thyroid, testis, stomach, trachea and spinal cord. Lower levels found in skeletal muscle, intestine and lymph node. No expression detected in brain. In the retina, expressed in cone but not rod outer segments.

It localises to the membrane. The enzyme catalyses all-trans-retinol + NADP(+) = all-trans-retinal + NADPH + H(+). Functionally, catalyzes the reduction of all-trans-retinal to all-trans-retinol in the presence of NADPH. In Homo sapiens (Human), this protein is Short-chain dehydrogenase/reductase 3 (DHRS3).